We begin with the raw amino-acid sequence, 241 residues long: MAEEQPQVELFVKAGSDGAKIGNCPFSQRLFMVLWLKGVTFNVTTVDTKRRTETVQKLCPGGQLPFLLYGTEVHTDTNKIEEFLEAVLCPPRYPKLAALNPESNTAGLDIFAKFSAYIKNSNPALNDNLEKGLLKALKVLDNYLTSPLPEEVDETSAEDEGVSQRKFLDGNELTLADCNLLPKLHIVQVVCKKYRGFTIPEAFRGVHRYLSNAYAREEFASTCPDDEEIELAYEQVAKALK.

Position 2 is an N-acetylalanine (Ala2). A required for insertion into the membrane region spans residues 2-90 (AEEQPQVELF…EEFLEAVLCP (89 aa)). Lys13 carries the N6-acetyllysine modification. Cys24 serves as a coordination point for glutathione. The residue at position 24 (Cys24) is an S-glutathionyl cysteine; alternate. Positions 24 to 27 (CPFS) match the G-site motif. Cys24 and Cys59 form a disulfide bridge. A helical transmembrane segment spans residues 26 to 46 (FSQRLFMVLWLKGVTFNVTTV). Residues Leu64 and Thr77 each coordinate glutathione. A GST C-terminal domain is found at 93 to 233 (YPKLAALNPE…PDDEEIELAY (141 aa)). At Lys119 the chain carries N6-acetyllysine. Position 121 is a phosphoserine (Ser121). At Lys131 the chain carries N6-acetyllysine. Ser156 and Ser211 each carry phosphoserine. A Phosphotyrosine modification is found at Tyr233.

Belongs to the chloride channel CLIC family. As to quaternary structure, monomer. Homodimer (in vitro). Interacts with TRAPPC2. Dimerization requires a conformation change that leads to the exposure of a large hydrophobic surface. In vivo, this may lead to membrane insertion. Interacts with AKAP9. In terms of processing, hydrogen peroxide treatment causes a conformation change, leading to dimerization and formation of an intramolecular disulfide bond between Cys-24 and Cys-59. In terms of tissue distribution, expression is prominent in heart, placenta, liver, kidney and pancreas.

The protein resides in the nucleus. The protein localises to the nucleus membrane. It localises to the cytoplasm. Its subcellular location is the cell membrane. It is found in the endoplasmic reticulum. It carries out the reaction L-dehydroascorbate + 2 glutathione = glutathione disulfide + L-ascorbate. The enzyme catalyses chloride(in) = chloride(out). It catalyses the reaction iodide(out) = iodide(in). The catalysed reaction is thiocyanate(in) = thiocyanate(out). It carries out the reaction nitrate(in) = nitrate(out). The enzyme catalyses bromide(in) = bromide(out). It catalyses the reaction fluoride(in) = fluoride(out). The oxidoreductase activity is inhibited by rapamycin, amphotericin B and IAA-94. The channel conductance is regulated by pH and redox membrane potential. Inhibited by IAA-94. In terms of biological role, in the soluble state, catalyzes glutaredoxin-like thiol disulfide exchange reactions with reduced glutathione as electron donor. Reduces selenite and dehydroascorbate and may act as an antioxidant during oxidative stress response. Can insert into membranes and form voltage-dependent multi-ion conductive channels. Membrane insertion seems to be redox-regulated and may occur only under oxidizing conditions. Involved in regulation of the cell cycle. The polypeptide is Chloride intracellular channel protein 1 (Homo sapiens (Human)).